The sequence spans 474 residues: L-lactate permease (474 aa).

Transmembrane regions (helical) follow at residues 4-21 (AILA…LAVF), 28-48 (ACFI…HFSI), 63-85 (FWPI…ASGG), 105-127 (LILA…AVAI), 142-164 (AALI…LPVT), 177-199 (LSVI…LVSL), 209-231 (GVFG…VSNY), 238-255 (SIIG…FVNL), 281-303 (FILV…QLLA), 324-346 (WLTS…QGMS), and 387-409 (IAVS…IGTL).

It belongs to the lactate permease family.

The protein resides in the cell membrane. In terms of biological role, plays a role in L-lactate utilization. The polypeptide is L-lactate permease (lctP) (Streptococcus iniae (Streptococcus shiloi)).